Here is a 411-residue protein sequence, read N- to C-terminus: 2,3-bisphosphoglycerate-independent phosphoglycerate mutase (411 aa).

It belongs to the BPG-independent phosphoglycerate mutase family. A-PGAM subfamily.

It catalyses the reaction (2R)-2-phosphoglycerate = (2R)-3-phosphoglycerate. The protein operates within carbohydrate degradation; glycolysis; pyruvate from D-glyceraldehyde 3-phosphate: step 3/5. Functionally, catalyzes the interconversion of 2-phosphoglycerate and 3-phosphoglycerate. This is 2,3-bisphosphoglycerate-independent phosphoglycerate mutase from Thermococcus gammatolerans (strain DSM 15229 / JCM 11827 / EJ3).